The sequence spans 439 residues: Protease Do-like 1, chloroplastic (439 aa).

Residues 154 to 323 (QGSGSGFVWD…IPVDTVGGIV (170 aa)) are serine protease. Residues His-173, Asp-203, and Ser-282 each act as charge relay system in the active site. The 98-residue stretch at 326–423 (LVRFGKVTRP…EVTVEVLRGD (98 aa)) folds into the PDZ domain.

The protein belongs to the peptidase S1C family. In terms of assembly, interacts with PTAC16 and other potential targets for degradation under high light conditions.

The protein resides in the plastid. It localises to the chloroplast thylakoid membrane. With respect to regulation, inhibited by phenylmethylsulfonyl fluoride and O-phenanthroline. Serine protease that is required at high temperature. May be involved in the degradation of damaged proteins. In vivo, can degrade beta-casein. The sequence is that of Protease Do-like 1, chloroplastic (DEGP1) from Arabidopsis thaliana (Mouse-ear cress).